The sequence spans 232 residues: Large ribosomal subunit protein uL1 (232 aa).

This sequence belongs to the universal ribosomal protein uL1 family. In terms of assembly, part of the 50S ribosomal subunit.

Binds directly to 23S rRNA. The L1 stalk is quite mobile in the ribosome, and is involved in E site tRNA release. In terms of biological role, protein L1 is also a translational repressor protein, it controls the translation of the L11 operon by binding to its mRNA. This chain is Large ribosomal subunit protein uL1, found in Burkholderia vietnamiensis (strain G4 / LMG 22486) (Burkholderia cepacia (strain R1808)).